We begin with the raw amino-acid sequence, 496 residues long: Glutamate--tRNA ligase 2 (496 aa).

The short motif at 13–23 is the 'HIGH' region element; the sequence is PSPTGRLHVGG. The 'KMSKS' region signature appears at 255-259; sequence KLSKR. K258 contributes to the ATP binding site.

It belongs to the class-I aminoacyl-tRNA synthetase family. Glutamate--tRNA ligase type 1 subfamily. Monomer.

The protein resides in the cytoplasm. It carries out the reaction tRNA(Glu) + L-glutamate + ATP = L-glutamyl-tRNA(Glu) + AMP + diphosphate. Catalyzes the attachment of glutamate to tRNA(Glu) in a two-step reaction: glutamate is first activated by ATP to form Glu-AMP and then transferred to the acceptor end of tRNA(Glu). The protein is Glutamate--tRNA ligase 2 of Rubrobacter xylanophilus (strain DSM 9941 / JCM 11954 / NBRC 16129 / PRD-1).